The following is a 245-amino-acid chain: Protein ARV 1 (245 aa).

5 helical membrane-spanning segments follow: residues I70–L90, I117–A137, I163–I183, T200–Q220, and P224–I244.

The protein belongs to the ARV1 family. As to expression, restricted to tissues in which cells are actively dividing or expanding. Mostly expressed in roots and flowers, and, to a lower extent, in stems and leaves.

Its subcellular location is the endoplasmic reticulum membrane. Functionally, mediator of sterol homeostasis involved in sterol uptake, trafficking and distribution into membranes. Also regulates the sphingolipid metabolism. The polypeptide is Protein ARV 1 (Arabidopsis thaliana (Mouse-ear cress)).